The primary structure comprises 123 residues: Alpha-lactalbumin (123 aa).

The 123-residue stretch at lysine 1–leucine 123 folds into the C-type lysozyme domain. Intrachain disulfides connect cysteine 6–cysteine 120, cysteine 28–cysteine 111, cysteine 61–cysteine 77, and cysteine 73–cysteine 91. 5 residues coordinate Ca(2+): lysine 79, aspartate 82, aspartate 84, aspartate 87, and aspartate 88.

Belongs to the glycosyl hydrolase 22 family. As to quaternary structure, lactose synthase (LS) is a heterodimer of a catalytic component, beta1,4-galactosyltransferase (beta4Gal-T1) and a regulatory component, alpha-lactalbumin (LA). Mammary gland specific. Secreted in milk.

It is found in the secreted. Functionally, regulatory subunit of lactose synthase, changes the substrate specificity of galactosyltransferase in the mammary gland making glucose a good acceptor substrate for this enzyme. This enables LS to synthesize lactose, the major carbohydrate component of milk. In other tissues, galactosyltransferase transfers galactose onto the N-acetylglucosamine of the oligosaccharide chains in glycoproteins. This is Alpha-lactalbumin (LALBA) from Equus asinus (Donkey).